A 517-amino-acid chain; its full sequence is Transcription factor MTB3 (517 aa).

Residues 290–331 (GNSSNGYRSDEGEGKLYKEELDERKPRKRGRKPANGREEALN) are disordered. Over residues 297–314 (RSDEGEGKLYKEELDERK) the composition is skewed to basic and acidic residues. A basic motif; degenerate region spans residues 327–340 (EEALNHVEAERQRR). The bHLH domain maps to 327–376 (EEALNHVEAERQRREKLNQRFYALRAVVPNISKMDKASLLGDAIAYITDL). Residues 341 to 376 (EKLNQRFYALRAVVPNISKMDKASLLGDAIAYITDL) are helix-loop-helix motif.

Its subcellular location is the nucleus. Transcription factor that negatively regulates jasmonate (JA) signaling. Negatively regulates JA-dependent response to wounding, JA-induced expression of defense genes, JA-dependent responses against herbivorous insects, and JA-dependent resistance against Botrytis cinerea infection. Plays a positive role in resistance against the bacterial pathogen Pseudomonas syringae pv tomato DC3000. This Solanum lycopersicum (Tomato) protein is Transcription factor MTB3.